Here is a 425-residue protein sequence, read N- to C-terminus: Glutamate-1-semialdehyde 2,1-aminomutase (425 aa).

N6-(pyridoxal phosphate)lysine is present on Lys265.

Belongs to the class-III pyridoxal-phosphate-dependent aminotransferase family. HemL subfamily. In terms of assembly, homodimer. Pyridoxal 5'-phosphate is required as a cofactor.

It localises to the cytoplasm. It catalyses the reaction (S)-4-amino-5-oxopentanoate = 5-aminolevulinate. It participates in porphyrin-containing compound metabolism; protoporphyrin-IX biosynthesis; 5-aminolevulinate from L-glutamyl-tRNA(Glu): step 2/2. In Clostridium perfringens (strain 13 / Type A), this protein is Glutamate-1-semialdehyde 2,1-aminomutase.